The sequence spans 825 residues: Lon protease (825 aa).

The 197-residue stretch at Leu41–Lys237 folds into the Lon N-terminal domain. An ATP-binding site is contributed by Gly388–Thr395. A Lon proteolytic domain is found at Ser625–Leu805. Catalysis depends on residues Ser711 and Lys754.

This sequence belongs to the peptidase S16 family. As to quaternary structure, homohexamer. Organized in a ring with a central cavity.

The protein localises to the cytoplasm. The catalysed reaction is Hydrolysis of proteins in presence of ATP.. Its function is as follows. ATP-dependent serine protease that mediates the selective degradation of mutant and abnormal proteins as well as certain short-lived regulatory proteins. Required for cellular homeostasis and for survival from DNA damage and developmental changes induced by stress. Degrades polypeptides processively to yield small peptide fragments that are 5 to 10 amino acids long. Binds to DNA in a double-stranded, site-specific manner. This chain is Lon protease, found in Methanosphaera stadtmanae (strain ATCC 43021 / DSM 3091 / JCM 11832 / MCB-3).